The following is a 160-amino-acid chain: E3 ubiquitin ligase complex SCF subunit sconC (160 aa).

Residues 101–160 (ILAANYLDIKALLDVGCKTVANMIKGKSPEEIRKTFNIQNDFTPEEEDQIRRENEWAEDR) form an interaction with the F-box domain of F-box proteins region.

The protein belongs to the SKP1 family. As to quaternary structure, component of the SCF (SKP1-CUL1-F-box protein) E3 ubiquitin ligase complexes.

Its pathway is protein modification; protein ubiquitination. In terms of biological role, essential component of the SCF (SKP1-CUL1-F-box protein) E3 ubiquitin ligase complexes, which mediate the ubiquitination and subsequent proteasomal degradation of target proteins. Controls sulfur metabolite repression, probably by mediating the inactivation or degradation of the metR transcription factor. The sequence is that of E3 ubiquitin ligase complex SCF subunit sconC (sconC) from Talaromyces stipitatus (strain ATCC 10500 / CBS 375.48 / QM 6759 / NRRL 1006) (Penicillium stipitatum).